We begin with the raw amino-acid sequence, 412 residues long: Cytochrome p450 CYP199A2 (412 aa).

Residues 94 to 97 and Ser247 each bind substrate; that span reads RPPS. A heme-binding site is contributed by Cys361.

This sequence belongs to the cytochrome P450 family. In terms of assembly, interacts with the ferredoxin-like iron-sulfur protein ThcC. The cofactor is heme.

Its subcellular location is the cytoplasm. It catalyses the reaction 4-methoxybenzoate + AH2 + O2 = 4-hydroxybenzoate + formaldehyde + A + H2O. The oxidative demethylation of 4-methoxybenzoate requires the participation of the monooxygenase CYP199A2, the ferredoxin-like protein ThcC/RPA1872 and a ferredoxin reductase to mediate the transfer of electrons from NADH to CYP199A2. It is also active with 4-ethylbenzoate. This is Cytochrome p450 CYP199A2 from Rhodopseudomonas palustris (strain ATCC BAA-98 / CGA009).